The chain runs to 264 residues: Taurine import ATP-binding protein TauB (264 aa).

One can recognise an ABC transporter domain in the interval 4–233; the sequence is LQLERISAQY…RYAAGESARA (230 aa). Residue 38–45 coordinates ATP; that stretch reads GPSGSGKT.

It belongs to the ABC transporter superfamily. Taurine importer (TC 3.A.1.17.1) family. In terms of assembly, the complex is composed of two ATP-binding proteins (TauB), two transmembrane proteins (TauC) and a solute-binding protein (TauA).

The protein resides in the cell inner membrane. It catalyses the reaction taurine(out) + ATP + H2O = taurine(in) + ADP + phosphate + H(+). Its function is as follows. Part of the ABC transporter complex TauABC involved in taurine import. Responsible for energy coupling to the transport system. The polypeptide is Taurine import ATP-binding protein TauB (Pseudomonas fluorescens (strain ATCC BAA-477 / NRRL B-23932 / Pf-5)).